Consider the following 97-residue polypeptide: MRVSALAFAAVLSLVSAKKINMHCNFAEDHTGMVQQPYCCRDLVPARGNSKANEALDCDQLDQPQLCDDQSRPACCYTIGAKKICTSHVIFQDAEDV.

An N-terminal signal peptide occupies residues 1 to 17 (MRVSALAFAAVLSLVSA). Cystine bridges form between Cys-24–Cys-75, Cys-39–Cys-67, Cys-40–Cys-58, and Cys-76–Cys-85.

The protein resides in the secreted. It is found in the cell wall. Aerial growth, conidiation, and dispersal of filamentous fungi in the environment rely upon a capability of their secreting small amphipathic proteins called hydrophobins (HPBs) with low sequence identity. Class I can self-assemble into an outermost layer of rodlet bundles on aerial cell surfaces, conferring cellular hydrophobicity that supports fungal growth, development and dispersal; whereas Class II form highly ordered films at water-air interfaces through intermolecular interactions but contribute nothing to the rodlet structure. In P.expansum, hydrophobins contribute to germination, tolerance to cold stress and mycotoxins patulin and citrinin production. HfbC, HfbD, HfbE, and HfbF have functional redundancy in fungal surface hydrophobicity. The chain is Unclassified hydrophobin F from Penicillium expansum (Blue mold rot fungus).